Reading from the N-terminus, the 290-residue chain is Oxaloacetate decarboxylase 2 (290 aa).

S50 serves as a coordination point for substrate. Residue D88 participates in Mg(2+) binding. Residues R159 and H235 each coordinate substrate.

The protein belongs to the isocitrate lyase/PEP mutase superfamily. Oxaloacetate decarboxylase family. As to quaternary structure, homotetramer; dimer of dimers. Mg(2+) is required as a cofactor.

The enzyme catalyses oxaloacetate + H(+) = pyruvate + CO2. Its function is as follows. Catalyzes the decarboxylation of oxaloacetate into pyruvate. Seems to play a role in maintaining cellular concentrations of bicarbonate and pyruvate. The chain is Oxaloacetate decarboxylase 2 from Pseudomonas fluorescens (strain Pf0-1).